The primary structure comprises 641 residues: Epstein-Barr nuclear antigen 1 (641 aa).

Gly residues predominate over residues 1–14; sequence MSDEGPGTGPGNGL. Disordered regions lie at residues 1 to 124 and 168 to 478; these read MSDE…AGGA and GAGA…NPKF. The segment covering 41–50 has biased composition (basic residues); the sequence is RGRGRGRGRG. Gly residues-rich tracts occupy residues 51–62, 84–124, and 168–352; these read GGRPGAPGGSGS, GAHG…AGGA, and GAGA…GSGG. An interaction with host C1QBP/P32 region spans residues 325 to 376; sequence GGGGRGRGGSGGRGRGGSGGRGRGGSGGRRGRGRERARGRSRERARGRGRGR. The segment at 328–378 is chromosome-tethering GR2; it reads GRGRGGSGGRGRGGSGGRGRGGSGGRRGRGRERARGRSRERARGRGRGRGE. The segment covering 358–381 has biased composition (basic and acidic residues); that stretch reads RERARGRSRERARGRGRGRGEKRP. Positions 379–386 are nuclear localization signal; it reads KRPRSPSS. Positions 383 to 394 are enriched in low complexity; the sequence is SPSSQSSSSGSP. Phosphoserine occurs at positions 385 and 393. An interaction with host CSNK2B region spans residues 387-395; sequence QSSSSGSPP. The interaction with host USP7 stretch occupies residues 436-450; the sequence is QGPTDDPGEGPSTGP. Positions 452–607 are DBD/DD; sequence GQGDGGRRKK…CSFDDGVDLP (156 aa). Positions 458–470 are enriched in basic residues; sequence RRKKGGWFGKHRG. Residues lysine 460, lysine 461, and tyrosine 518 each contribute to the DNA site. Tyrosine 518 serves as the catalytic For site-specific DNA cleavage activity. The disordered stretch occupies residues 612–641; it reads PMVEGAAAEGDDGDDGDEGGDGDEGEEGQE. A compositionally biased stretch (acidic residues) spans 620 to 641; the sequence is EGDDGDDGDEGGDGDEGEEGQE.

The protein belongs to the herpesviridae EBNA1 family. Homodimer. Dimers can assemble into higher-order oligomers like a homohexamer. Binding to the DS element involves 2 dimers of EBNA1. Interacts with human USP7; this interaction is independent and simultaneous to EBNA1 interaction with CSNK2B as well as necessary for PML nuclear bodies disruption by EBNA1. Interacts with host CSNK2B (via KSSR motif); the interaction requires phosphorylation of EBNA1, is independent and simultaneous to EBNA1 interaction with USP7 as well as necessary for PML nuclear bodies disruption by EBNA1. EBNA1, USP7 and CSNK2B form a ternary complex. EBNA1, USP7 and CSNK2B form a ternary complex. Interacts with human EBP2; it is not clear if this interaction is linked with the ability of EBNA1 to associate with host mitotic chromosomes. Interacts with BGLF4; this interaction facilitates the switch from latent to lytic DNA replication by down-regulating EBNA1 replication function. Interacts with human PAX5; this interaction promotes EBNA1-dependent transcription. Interacts with host KPNA1/Importin subunit alpha-5; this interaction allows the nuclear import of EBNA1. Interacts with host KPNA2/Importin subunit alpha-1; this interaction allows the nuclear import of EBNA1. Interacts with host C1QBP/P32. Interacts with host BIRC5/Survivin; this interaction is probably important for EBV episome maintenance in Burkitt's lymphoma host cells. Post-translationally, phosphorylation at Ser-385 increases the nuclear import efficiency of EBNA1. Phosphorylation at Ser-393 is required for interaction with CSNK2B.

It localises to the host nucleus. Responsible for the origin of replication (oriP) dependent replication and maintenance of viral episomes during latent infection. EBNA1 dimer interacts with the DS (dyad symmetry) element within the origin of replication oriP and with a host mitotic chromosome to initiate viral DNA replication during latency. EBNA1 binding to DS recruits the host origin recognition complex (ORC). Governs the faithful mitotic segregation of the viral episomes by binding both the FR (family of repeats) element within oriP and the host mitotic chromosomes. Forms a cell cycle-dependent tyrosine-dependent DNA cross-link and single-strand cleavage at oriP required for terminating replication and maintaining viral episomes. Counteracts the stabilization of host p53/TP53 by host USP7, thereby decreasing apoptosis and increasing host cell survival. Induces degradation of host PML through the ubiquitin-proteasome system, which promotes lytic reactivation and may impair the host cell DNA repair. Increases the association of CK2 with PML proteins which increases the phosphorylation of PML proteins by CK2, triggering the polyubiquitylation and degradation of PML. Displays inhibitory effects on a SUMO2-modified complex that includes STUB1, KAP1 and USP7. This inhibitory effect possibly participates to the maintenance of latency linked to PML silencing. In Epstein-Barr virus (strain GD1) (HHV-4), this protein is Epstein-Barr nuclear antigen 1 (EBNA1).